We begin with the raw amino-acid sequence, 146 residues long: Leghemoglobin Lb120-1 (146 aa).

The Globin domain maps to 2–146; that stretch reads GFTEKQEALV…LASAIKKAMN (145 aa). 2 positions are modified to nitrated tyrosine: Tyr-24 and Tyr-29. Residue Ser-44 participates in heme b binding. Ser-44 bears the Phosphoserine mark. His-61 serves as a coordination point for O2. Residues Lys-64, His-93, and Lys-96 each contribute to the heme b site. Tyr-134 is subject to Nitrated tyrosine.

This sequence belongs to the plant globin family. In terms of assembly, monomer. In terms of processing, nitrated in effective nodules and particularly in hypoxic conditions; this mechanism may play a protective role in the symbiosis by buffering toxic peroxynitrite NO(2)(-). Nitration level decrease during nodule senescence. Post-translationally, phosphorylation at Ser-44 disrupts the molecular environment of its porphyrin ring oxygen binding pocket, thus leading to a reduced oxygen consumption and to the delivery of oxygen O(2) to symbiosomes. As to expression, root nodules.

It localises to the cytoplasm. The protein resides in the cytosol. The protein localises to the nucleus. Functionally, leghemoglobin that reversibly binds oxygen O(2) through a pentacoordinated heme iron. In root nodules, facilitates the diffusion of oxygen to the bacteroids while preventing the bacterial nitrogenase from being inactivated by buffering dioxygen, nitric oxide and carbon monoxide, and promoting the formation of reactive oxygen species (ROS, e.g. H(2)O(2)). This role is essential for symbiotic nitrogen fixation (SNF). This chain is Leghemoglobin Lb120-1, found in Pisum sativum (Garden pea).